Reading from the N-terminus, the 88-residue chain is Small muscular protein (88 aa).

Positions 22 to 66 (MGAFRPGAGQPPRRKECTPEVEEGVPPTSDEEKKPIPGAKKLPGP) are disordered.

It belongs to the SMPX family. As to expression, preferentially and abundantly expressed in heart and skeletal muscle.

In terms of biological role, plays a role in the regulatory network through which muscle cells coordinate their structural and functional states during growth, adaptation, and repair. This is Small muscular protein (SMPX) from Homo sapiens (Human).